The sequence spans 309 residues: Ubiquitin-conjugating enzyme E2 32 (309 aa).

Residues 11-166 (PAVKRILQEV…ERQKIIDEIH (156 aa)) form the UBC core domain. Cysteine 93 serves as the catalytic Glycyl thioester intermediate. The helical transmembrane segment at 275 to 295 (FTWAAVGLTIAIMVLLLKKFI) threads the bilayer.

It belongs to the ubiquitin-conjugating enzyme family.

It localises to the membrane. It catalyses the reaction S-ubiquitinyl-[E1 ubiquitin-activating enzyme]-L-cysteine + [E2 ubiquitin-conjugating enzyme]-L-cysteine = [E1 ubiquitin-activating enzyme]-L-cysteine + S-ubiquitinyl-[E2 ubiquitin-conjugating enzyme]-L-cysteine.. It functions in the pathway protein modification; protein ubiquitination. Functionally, accepts the ubiquitin from the E1 complex and catalyzes its covalent attachment to other proteins. The chain is Ubiquitin-conjugating enzyme E2 32 (UBC32) from Arabidopsis thaliana (Mouse-ear cress).